The following is a 933-amino-acid chain: Phosphoenolpyruvate carboxylase (933 aa).

Catalysis depends on residues histidine 164 and lysine 595.

The protein belongs to the PEPCase type 1 family. It depends on Mg(2+) as a cofactor.

The catalysed reaction is oxaloacetate + phosphate = phosphoenolpyruvate + hydrogencarbonate. Forms oxaloacetate, a four-carbon dicarboxylic acid source for the tricarboxylic acid cycle. The chain is Phosphoenolpyruvate carboxylase from Rhodopseudomonas palustris (strain BisB5).